The sequence spans 806 residues: Leucine--tRNA ligase (806 aa).

Positions 38–48 (PYPSGEIHMGH) match the 'HIGH' region motif. The 'KMSKS' region motif lies at 572-576 (KMSKS). An ATP-binding site is contributed by K575.

The protein belongs to the class-I aminoacyl-tRNA synthetase family.

It localises to the cytoplasm. The catalysed reaction is tRNA(Leu) + L-leucine + ATP = L-leucyl-tRNA(Leu) + AMP + diphosphate. This chain is Leucine--tRNA ligase, found in Helicobacter pylori (strain HPAG1).